The sequence spans 207 residues: MVATCLQVVGFVTSFVGWIGVIVTTSTNDWVVTCGYTIPTCRKLDELGSKGLWADCVMATGLYHCKPLVDILILPGYVQACRALMIAASVLGLPAILLLLTVLPCIRMGQEPGVAKYRRAQLAGVLLILLALCALVATIWFPVCAHRETTIVSFGYSLYAGWIGAVLCLVGGCVILCCAGDAQAFGENRFYYTAGSSSPTHAKSAHV.

Residue M1 is a topological domain, cytoplasmic. The chain crosses the membrane as a helical span at residues 2 to 22 (VATCLQVVGFVTSFVGWIGVI). The Extracellular portion of the chain corresponds to 23 to 82 (VTTSTNDWVVTCGYTIPTCRKLDELGSKGLWADCVMATGLYHCKPLVDILILPGYVQACR). A helical membrane pass occupies residues 83 to 103 (ALMIAASVLGLPAILLLLTVL). Topologically, residues 104–122 (PCIRMGQEPGVAKYRRAQL) are cytoplasmic. The helical transmembrane segment at 123–143 (AGVLLILLALCALVATIWFPV) threads the bilayer. Over 144–157 (CAHRETTIVSFGYS) the chain is Extracellular. A helical membrane pass occupies residues 158-178 (LYAGWIGAVLCLVGGCVILCC). At 179-207 (AGDAQAFGENRFYYTAGSSSPTHAKSAHV) the chain is on the cytoplasmic side. A phosphoserine mark is found at S197 and S198.

It belongs to the claudin family. As to quaternary structure, interacts with tetraspanin-3/TSPAN3. Interacts with OCLN.

Its subcellular location is the cell junction. The protein resides in the tight junction. The protein localises to the cell membrane. In terms of biological role, plays a major role in tight junction-specific obliteration of the intercellular space, through calcium-independent cell-adhesion activity. The polypeptide is Claudin-11 (CLDN11) (Homo sapiens (Human)).